The primary structure comprises 1968 residues: RNA replication polyprotein (1968 aa).

Positions 63–254 (SPYSAVVHSH…YQQPLKGGYL (192 aa)) constitute an Alphavirus-like MT domain. An OTU domain is found at 883-991 (YKRVSGPGDG…SEHYEPQVLR (109 aa)). In terms of domain architecture, Peptidase C23 spans 990-1080 (LRNGCVIESV…ISDEHMSFCG (91 aa)). Active-site residues include cysteine 994 and histidine 1075. The (+)RNA virus helicase ATP-binding domain occupies 1134–1316 (ATGVLGSALF…KVRSHRFLNC (183 aa)). 1166 to 1173 (GTFGSGKS) contacts ATP. Positions 1317–1454 (NFIGRLPCEI…CKTAIPDDLN (138 aa)) constitute a (+)RNA virus helicase C-terminal domain. In terms of domain architecture, RdRp catalytic spans 1749-1856 (RICTESDYEA…SRRLQPTKKF (108 aa)).

It belongs to the potexviruses/carlaviruses RNA replication protein family. Post-translationally, specific enzymatic cleavages by the viral protease yield mature proteins.

The enzyme catalyses RNA(n) + a ribonucleoside 5'-triphosphate = RNA(n+1) + diphosphate. The catalysed reaction is ATP + H2O = ADP + phosphate + H(+). RNA-directed RNA polymerase involved in viral RNA replication. Its function is as follows. Protease: Thiol protease that cleaves the polyprotein. This Solanum tuberosum (Potato) protein is RNA replication polyprotein.